The primary structure comprises 713 residues: MLKKEYLKNPYLVLFAMIILAYVFSVLCRFYWIWWASEFNEYFFNNQLMIISNDGYAFAEGARDMIAGFHQPNDLSYYGSSLSTLTYWLYKITPFSFESIILYMSTFLSSLVVIPIILLANEYKRPLMGFVAALLASVANSYYNRTMSGYYDTDMLVIVLPMFILFFMVRMILKKDFFSLIALPLFIGIYLWWYPSSYTLNVALIGLFLIYTLIFHRKEKIFYIAVILSSLTLSNIAWFYQSAIIVILFALFALEQKRLNFMIIGILGSATLIFLILSGGVDPILYQLKFYIFRNDESANLTQGFMYFNVNQTIQEVENVDFSEFMRRISGSEIVFLFSLFGFVWLLRKHKSMIMALPILVLGFLALKGGLRFTIYSVPVMALGFGFLLSEFKAILVKKYSQLTSNVCIVFATILTLAPVFIHIYNYKAPTVFSQNEASLLNQLKNIANREDYVVTWWDYGYPVRYYSDVKTLVDGGKHLGKDNFFPSFALSKDEQAAANMARLSVEYTEKSFYAPQNDILKSDILQAMMKDYNQSNVDLFLASLSKPDFKIDTPKTRDIYLYMPARMSLIFSTVASFSFINLDTGVLDKPFTFSTAYPLDVKNGEIYLSNGVVLSDDFRSFKIGDNVVSVNSIVEINSIKQGEYKITPIDDKAQFYIFYLKDSAIPYAQFILMDKTMFNSAYVQMFFLGNYDKNLFDLVINSRDAKVFKLKI.

Topologically, residues 1-11 are cytoplasmic; it reads MLKKEYLKNPY. A helical transmembrane segment spans residues 12–35; that stretch reads LVLFAMIILAYVFSVLCRFYWIWW. Residues 36–96 lie on the Periplasmic side of the membrane; the sequence is ASEFNEYFFN…YWLYKITPFS (61 aa). The short motif at 52 to 54 is the DXD motif 1 element; it reads SND. A Mn(2+)-binding site is contributed by Asp-54. The chain crosses the membrane as a helical span at residues 97 to 122; that stretch reads FESIILYMSTFLSSLVVIPIILLANE. The Cytoplasmic portion of the chain corresponds to 123-125; sequence YKR. The helical transmembrane segment at 126–144 threads the bilayer; the sequence is PLMGFVAALLASVANSYYN. Over 145 to 152 the chain is Periplasmic; sequence RTMSGYYD. Asp-152 is a binding site for Mn(2+). The short motif at 152-154 is the DXD motif 2 element; that stretch reads DTD. Residues 153–174 traverse the membrane as a helical segment; that stretch reads TDMLVIVLPMFILFFMVRMILK. The Cytoplasmic segment spans residues 175–176; it reads KD. Residues 177–192 form a helical membrane-spanning segment; sequence FFSLIALPLFIGIYLW. The Periplasmic segment spans residues 193–197; that stretch reads WYPSS. 194 to 196 is a binding site for [alpha-D-GalNAc-(1-&gt;4)]2-[beta-D-Glc-(1-&gt;3)]-[alpha-D-GalNAc-(1-&gt;4)]2-alpha-D-GalNAc-(1-&gt;3)-alpha-D-diNAcBac-tri-trans,hepta-cis-undecaprenyl diphosphate; sequence YPS. The helical transmembrane segment at 198–215 threads the bilayer; the sequence is YTLNVALIGLFLIYTLIF. The Cytoplasmic segment spans residues 216–220; the sequence is HRKEK. Residues 221 to 233 form a helical membrane-spanning segment; sequence IFYIAVILSSLTL. Topologically, residues 234–237 are periplasmic; it reads SNIA. A helical transmembrane segment spans residues 238 to 254; that stretch reads WFYQSAIIVILFALFAL. Residues 255 to 260 are Cytoplasmic-facing; sequence EQKRLN. A helical transmembrane segment spans residues 261-278; sequence FMIIGILGSATLIFLILS. Residues 279-324 are Periplasmic-facing; the sequence is GGVDPILYQLKFYIFRNDESANLTQGFMYFNVNQTIQEVENVDFSE. Tyr-291 serves as a coordination point for [alpha-D-GalNAc-(1-&gt;4)]2-[beta-D-Glc-(1-&gt;3)]-[alpha-D-GalNAc-(1-&gt;4)]2-alpha-D-GalNAc-(1-&gt;3)-alpha-D-diNAcBac-tri-trans,hepta-cis-undecaprenyl diphosphate. The TIXE motif motif lies at 313-316; the sequence is TIQE. Glu-316 contributes to the Mn(2+) binding site. A helical transmembrane segment spans residues 325-347; that stretch reads FMRRISGSEIVFLFSLFGFVWLL. Residues 348–352 lie on the Cytoplasmic side of the membrane; the sequence is RKHKS. Residues 353–369 traverse the membrane as a helical segment; sequence MIMALPILVLGFLALKG. Topologically, residues 370 to 373 are periplasmic; it reads GLRF. Arg-372 lines the [alpha-D-GalNAc-(1-&gt;4)]2-[beta-D-Glc-(1-&gt;3)]-[alpha-D-GalNAc-(1-&gt;4)]2-alpha-D-GalNAc-(1-&gt;3)-alpha-D-diNAcBac-tri-trans,hepta-cis-undecaprenyl diphosphate pocket. The helical transmembrane segment at 374-396 threads the bilayer; it reads TIYSVPVMALGFGFLLSEFKAIL. Residues 397-406 lie on the Cytoplasmic side of the membrane; that stretch reads VKKYSQLTSN. The helical transmembrane segment at 407 to 427 threads the bilayer; it reads VCIVFATILTLAPVFIHIYNY. Over 428–713 the chain is Periplasmic; that stretch reads KAPTVFSQNE…RDAKVFKLKI (286 aa). Residues 457–459 form an interacts with target acceptor peptide in protein substrate region; it reads WWD. The WWDYG motif signature appears at 457–461; it reads WWDYG. Position 462 (Tyr-462) interacts with [alpha-D-GalNAc-(1-&gt;4)]2-[beta-D-Glc-(1-&gt;3)]-[alpha-D-GalNAc-(1-&gt;4)]2-alpha-D-GalNAc-(1-&gt;3)-alpha-D-diNAcBac-tri-trans,hepta-cis-undecaprenyl diphosphate. Asn-534 carries N-linked (DATDGlc) asparagine glycosylation. The MI motif motif lies at 568-575; the sequence is MSLIFSTV.

Belongs to the STT3 family. It depends on Mg(2+) as a cofactor. Requires Mn(2+) as cofactor.

The protein localises to the cell inner membrane. The catalysed reaction is tritrans,heptacis-undecaprenyl diphosphooligosaccharide + [protein]-L-asparagine = tritrans,heptacis-undecaprenyl diphosphate + a glycoprotein with the oligosaccharide chain attached by N-beta-D-glycosyl linkage to protein L-asparagine.. It functions in the pathway protein modification; protein glycosylation. Its function is as follows. Oligosaccharyltransferase that catalyzes the transfer of a preassembled heptasaccharide from a lipid donor to an asparagine residue in nascent polypeptide chains, affording a beta-linked glycan to the asparagine side chain of target proteins. In terms of biological role, oligosaccharyl transferase (OST) that catalyzes the initial transfer of a defined glycan (GalNAc(2)GlcGalNAc(3)Bac(NAc)(2) in eubacteria, where Bac(NAc)(2) is di-N-acetyl bacillosamine) from the lipid carrier undecaprenol-pyrophosphate to an asparagine residue within an Asp/Glu-Asn-X-Ser/Thr consensus motif in nascent polypeptide chains, the first step in protein N-glycosylation. The chain is Undecaprenyl-diphosphooligosaccharide--protein glycotransferase (pglB) from Campylobacter jejuni (strain RM1221).